A 534-amino-acid polypeptide reads, in one-letter code: Cysteine/serine-rich nuclear protein 2 (534 aa).

An N-acetylmethionine modification is found at Met1. Disordered stretches follow at residues 1–52 (MDAF…FTPT) and 480–534 (DCGL…PLAV). Positions 31 to 40 (SSDSADSCDS) are enriched in low complexity. Polar residues predominate over residues 42 to 52 (NPPTTASFTPT). Over residues 480 to 492 (DCGLKEPESEDLH) the composition is skewed to basic and acidic residues.

The protein belongs to the AXUD1 family. In terms of tissue distribution, highest expression detected in thymus, brain and ovary. Low levels detected in naive T-cells.

The protein localises to the nucleus. Functionally, binds to the consensus sequence 5'-AGAGTG-3' and has transcriptional activator activity. May play a role in apoptosis. The polypeptide is Cysteine/serine-rich nuclear protein 2 (Csrnp2) (Mus musculus (Mouse)).